The chain runs to 59 residues: UPF0434 protein GOX0764 (59 aa).

The protein belongs to the UPF0434 family.

The polypeptide is UPF0434 protein GOX0764 (Gluconobacter oxydans (strain 621H) (Gluconobacter suboxydans)).